Here is a 199-residue protein sequence, read N- to C-terminus: NAD(P)H dehydrogenase (quinone) (199 aa).

The region spanning 4–190 (VLVLYYSAYG…DGARYQGRKI (187 aa)) is the Flavodoxin-like domain. Residues 10-15 (SAYGHI) and 78-80 (TRF) contribute to the FMN site. An NAD(+)-binding site is contributed by Tyr12. Trp98 contributes to the substrate binding site. FMN-binding positions include 113–119 (STATQHG) and His134.

This sequence belongs to the WrbA family. It depends on FMN as a cofactor.

It catalyses the reaction a quinone + NADH + H(+) = a quinol + NAD(+). It carries out the reaction a quinone + NADPH + H(+) = a quinol + NADP(+). The polypeptide is NAD(P)H dehydrogenase (quinone) (Xanthobacter autotrophicus (strain ATCC BAA-1158 / Py2)).